Consider the following 80-residue polypeptide: uncharacterized protein (80 aa).

The first 23 residues, 1–23, serve as a signal peptide directing secretion; that stretch reads MKWNNMLKAAGIAVLLFSVFAYA.

This is an uncharacterized protein from Bacillus subtilis (strain 168).